We begin with the raw amino-acid sequence, 552 residues long: Non-structural protein NS1 (552 aa).

It belongs to the orbivirus non-structural protein NS1 family.

In Bluetongue virus 10 (isolate USA) (BTV 10), this protein is Non-structural protein NS1 (Segment-5).